The following is a 28-amino-acid chain: Short cationic peptide-1b (28 aa).

At glutamate 28 the chain carries Glutamic acid 1-amide.

Expressed by the venom gland.

It is found in the secreted. This Cupiennius salei (American wandering spider) protein is Short cationic peptide-1b.